The primary structure comprises 382 residues: Hyaluronidase (382 aa).

Positions 1 to 28 form a signal peptide, or 24; sequence MSRPLVITEGMMIGVLLMLAPINALLLG. A propeptide spanning residues 29–33 is cleaved from the precursor; the sequence is FVQST. Disulfide bonds link Cys-54-Cys-345 and Cys-221-Cys-233. Asn-115 carries N-linked (GlcNAc...) asparagine glycosylation. Catalysis depends on Glu-145, which acts as the Proton donor. Asn-263 is a glycosylation site (N-linked (GlcNAc...) (complex) asparagine).

The protein belongs to the glycosyl hydrolase 56 family. As to quaternary structure, homotetramer. N-glycosylated. Glycans found include a majority of small oligosaccharides (Man1-3GlcNAc2), most of which are either alpha 1,3-monofucosylated or alpha 1,3-(alpha 1,6-)difucosylated at the innermost GlcNAc residue, approximately 5% of high-mannose type structures, and 8% contains the terminal trisaccharide GalNAc beta 1-4[Fuc alpha 1-3]GlcNAc beta 1-in beta 1,2-linkage to the core alpha 1,3-mannosyl residue. In terms of tissue distribution, expressed in the venom glands of worker bees. It is also detected in the testes of drones but not in the queen-bee venom glands or in pupae.

It is found in the secreted. The catalysed reaction is Random hydrolysis of (1-&gt;4)-linkages between N-acetyl-beta-D-glucosamine and D-glucuronate residues in hyaluronate.. Its function is as follows. Hydrolyzes high molecular weight hyaluronic acid to produce small oligosaccharides. In Apis mellifera (Honeybee), this protein is Hyaluronidase.